Here is a 309-residue protein sequence, read N- to C-terminus: Serine/threonine-protein phosphatase 2A catalytic subunit beta isoform (309 aa).

Aspartate 57, histidine 59, aspartate 85, and asparagine 117 together coordinate Mn(2+). Histidine 118 serves as the catalytic Proton donor. Residues histidine 167 and histidine 241 each coordinate Mn(2+). The residue at position 307 (tyrosine 307) is a Phosphotyrosine. A Leucine methyl ester modification is found at leucine 309.

It belongs to the PPP phosphatase family. PP-1 subfamily. In terms of assembly, PP2A consists of a common heterodimeric core enzyme (composed of a 36 kDa catalytic subunit (subunit C) and a 65 kDa constant regulatory subunit (PR65) (subunit A)) that associates with a variety of regulatory subunits. Proteins that associate with the core dimer include three families of regulatory subunits B (the R2/B/PR55/B55, R3/B''/PR72/PR130/PR59 and R5/B'/B56 families), the 48 kDa variable regulatory subunit, viral proteins, and cell signaling molecules. Binds PPME1. May indirectly interact with SGO1, most probably through regulatory B56 subunits. Found in a complex with at least ARL2, PPP2CB, PPP2R1A, PPP2R2A, PPP2R5E and TBCD. Interacts with TBCD. Interacts with CTTNBP2NL. Interacts with PTPA. Part of the core of STRIPAK complexes composed of PP2A catalytic and scaffolding subunits, the striatins (PP2A regulatory subunits), the striatin-associated proteins MOB4, STRIP1 and STRIP2, PDCD10 and members of the STE20 kinases, such as STK24 and STK26. Requires Mn(2+) as cofactor. Reversibly methyl esterified on Leu-309 by leucine carboxyl methyltransferase 1 (LCMT1) and protein phosphatase methylesterase 1 (PPME1). Carboxyl methylation influences the affinity of the catalytic subunit for the different regulatory subunits, thereby modulating the PP2A holoenzyme's substrate specificity, enzyme activity and cellular localization. Post-translationally, phosphorylation of either threonine (by autophosphorylation-activated protein kinase) or tyrosine results in inactivation of the phosphatase. Auto-dephosphorylation has been suggested as a mechanism for reactivation. In terms of processing, may be monoubiquitinated by NOSIP.

It is found in the cytoplasm. The protein localises to the nucleus. It localises to the chromosome. The protein resides in the centromere. Its subcellular location is the cytoskeleton. It is found in the spindle pole. It catalyses the reaction O-phospho-L-seryl-[protein] + H2O = L-seryl-[protein] + phosphate. The catalysed reaction is O-phospho-L-threonyl-[protein] + H2O = L-threonyl-[protein] + phosphate. Functionally, catalytic subunit of protein phosphatase 2A (PP2A), a serine/threonine phosphatase involved in the regulation of a wide variety of enzymes, signal transduction pathways, and cellular events. PP2A can modulate the activity of phosphorylase B kinase, casein kinase 2, mitogen-stimulated S6 kinase, and MAP-2 kinase. Part of the striatin-interacting phosphatase and kinase (STRIPAK) complexes. STRIPAK complexes have critical roles in protein (de)phosphorylation and are regulators of multiple signaling pathways including Hippo, MAPK, nuclear receptor and cytoskeleton remodeling. Different types of STRIPAK complexes are involved in a variety of biological processes such as cell growth, differentiation, apoptosis, metabolism and immune regulation. In Bos taurus (Bovine), this protein is Serine/threonine-protein phosphatase 2A catalytic subunit beta isoform (PPP2CB).